We begin with the raw amino-acid sequence, 542 residues long: MAKIIAFDEEARRGLERGLNILADAVKVTLGPRGRNVVLEKKWGAPTITNDGVSIAKEIELEDPYEKIGAELVKEVAKKTDEVAGDGTTTATVLAQALVREGLRNVAAGADPLSLKRGIEKAVAAVTEQLLASAKEVETKEEIAATASISAADTQIGALIAEALDKVGKEGVITVEESNTFGLELELTEGMRFDKGYISQYFVTDAERQETVLEDPYILIVSSKISNVKDMVGILEKVMQSSKSLLIIAEDVETEALATLIVNKVRGLFKSVAVKAPGFGDRRKAQLADIAILTGGQVISEEVGLSLENATVDLLGQARKVVVTKDETTIVEGAGDAEQIAGRVAQIRAEIENTDSDYDREKLQERLAKLAGGVAVIKAGSATEVELKERKHRIEDAVRNAKAAVEEGIVPGGGVALIQAGVKAFETLQLEGDEATGANIVKVAIDAPLKQIAINAGLEPGVVVDKVRGLPVGHGLNAATGVYEDLLAAGVNDPVKVTRSALQNAASIAGLFLTTEVVVADKPQKNVPAAPGGDEMGGMGGF.

ATP-binding positions include T29–P32, D86–T90, G413, N477–A479, and D493.

This sequence belongs to the chaperonin (HSP60) family. In terms of assembly, forms a cylinder of 14 subunits composed of two heptameric rings stacked back-to-back. Interacts with the co-chaperonin GroES.

It is found in the cytoplasm. It carries out the reaction ATP + H2O + a folded polypeptide = ADP + phosphate + an unfolded polypeptide.. Functionally, together with its co-chaperonin GroES, plays an essential role in assisting protein folding. The GroEL-GroES system forms a nano-cage that allows encapsulation of the non-native substrate proteins and provides a physical environment optimized to promote and accelerate protein folding. This is Chaperonin GroEL 1 from Renibacterium salmoninarum (strain ATCC 33209 / DSM 20767 / JCM 11484 / NBRC 15589 / NCIMB 2235).